The primary structure comprises 185 residues: Potassium-transporting ATPase KdpC subunit (185 aa).

A helical membrane pass occupies residues 14–34; that stretch reads ALSLLTGVAYPLALTGIAAVI. The tract at residues 105–128 is disordered; sequence AQNGAPAPVDAVTASGSGLDPHVS.

The protein belongs to the KdpC family. As to quaternary structure, the system is composed of three essential subunits: KdpA, KdpB and KdpC.

Its subcellular location is the cell inner membrane. Functionally, part of the high-affinity ATP-driven potassium transport (or Kdp) system, which catalyzes the hydrolysis of ATP coupled with the electrogenic transport of potassium into the cytoplasm. This subunit acts as a catalytic chaperone that increases the ATP-binding affinity of the ATP-hydrolyzing subunit KdpB by the formation of a transient KdpB/KdpC/ATP ternary complex. The chain is Potassium-transporting ATPase KdpC subunit from Cereibacter sphaeroides (strain ATCC 17029 / ATH 2.4.9) (Rhodobacter sphaeroides).